A 302-amino-acid polypeptide reads, in one-letter code: UTP--glucose-1-phosphate uridylyltransferase (302 aa).

Belongs to the UDPGP type 2 family. In terms of assembly, homotetramer or homopentamer. Mg(2+) is required as a cofactor.

It carries out the reaction alpha-D-glucose 1-phosphate + UTP + H(+) = UDP-alpha-D-glucose + diphosphate. Functionally, may play a role in stationary phase survival. This is UTP--glucose-1-phosphate uridylyltransferase (galU) from Escherichia coli O157:H7.